The following is a 173-amino-acid chain: MVRKPGSMYRNVRQRSFTRRKYMGGVPGSQVIHYDMGDKANTTFPVKISLVAEEKCQIRHTALEAARITANRHLVADAGKMGFYMKLRVYPHEVLRENKQATGAGADRVSSGMRRAFGKNVGTAARVNSMQKLFTVAVEKQNFPAAKKALWHAGQKLPTPVRIVIDEGAELVQ.

Belongs to the universal ribosomal protein uL16 family.

In Methanosarcina mazei (strain ATCC BAA-159 / DSM 3647 / Goe1 / Go1 / JCM 11833 / OCM 88) (Methanosarcina frisia), this protein is Large ribosomal subunit protein uL16.